A 290-amino-acid polypeptide reads, in one-letter code: Protein EURL homolog (290 aa).

Positions 185-206 (SHSQAQKTEETSSGPEGTIQTQ) are disordered. Positions 228-251 (AKLQQRIQEVFEELTHQVQEKDSL) form a coiled coil.

The protein belongs to the EURL family. Interacts with CCDC85B. In terms of tissue distribution, expressed in brain (at protein level). Expressed in neural progenitor cells and postmitotic neurons of the embryonic cerebral cortex.

Plays a role in cortical progenitor cell proliferation and differentiation. Promotes dendritic spine development of post-migratory cortical projection neurons by modulating the beta-catenin signaling pathway. The protein is Protein EURL homolog of Mus musculus (Mouse).